Here is a 274-residue protein sequence, read N- to C-terminus: MAHYFVGDIQGCFAELQKLLAKVDFNPSRDELWAVGDLVARGPDSLATLRFFRSLGDSAKTVLGNHDLHLMALHGKLKRAKPSDNLTEILESPDISASIDWLRQQPLMRELPEHQLIMSHAGVPPQWSLEVLREEAALVSCALNQDDYLEALISQMYSDSAEKWDPSAIGIERLRYCINALTRMRYLYVDGRLDFDCKQPPENCTNPQLKPWFEFASPLRQCHTLVFGHWAALMGNVGDTKLKALDTGCCWGEHLTLWHLEKDQKITQKKLKKS.

Belongs to the Ap4A hydrolase family.

The enzyme catalyses P(1),P(4)-bis(5'-adenosyl) tetraphosphate + H2O = 2 ADP + 2 H(+). Hydrolyzes diadenosine 5',5'''-P1,P4-tetraphosphate to yield ADP. This Shewanella baltica (strain OS155 / ATCC BAA-1091) protein is Bis(5'-nucleosyl)-tetraphosphatase, symmetrical.